Consider the following 506-residue polypeptide: Heat stress transcription factor A-1 (506 aa).

The stretch at 157-207 forms a coiled coil; that stretch reads MEEEIEMLKRDKNVLMQELVRLRQQQQTTDHQLQTLGKRLQGMEQRQQQMM. Residues 164 to 214 form a hydrophobic repeat HR-A/B region; sequence LKRDKNVLMQELVRLRQQQQTTDHQLQTLGKRLQGMEQRQQQMMSFLAKAM. A disordered region spans residues 231–254; the sequence is RRRIVASNKKRRLPKQDGSLDSES. Residues 232-243 are compositionally biased toward basic residues; the sequence is RRIVASNKKRRL. Positions 239 to 242 match the Nuclear localization signal motif; sequence KKRR. The AHA signature appears at 449–456; that stretch reads DSFWEQFL.

It belongs to the HSF family. Class A subfamily. As to quaternary structure, homotrimer. In terms of processing, exhibits temperature-dependent phosphorylation.

The protein localises to the nucleus. In terms of biological role, transcriptional regulator that specifically binds DNA of heat shock promoter elements (HSE). In Oryza sativa subsp. japonica (Rice), this protein is Heat stress transcription factor A-1 (HSFA1).